The primary structure comprises 379 residues: MSEFLPFSRPAMGVEELAAVKEVLESGWITTGPKNQALEQAFCQLTGNQHAIAVSSATAGMHITLMALKIGKGDEVITPSLTWVSTLNMISLLGATPVMVDVDRDTLMVTPEAIESAITPRTKAIIPVHYAGAPADIDAIRAIGERYGIAVIEDAAHAVGTYYKGRHIGAKGTAIFSFHAIKNITCAEGGLIVTDNENLARQLRMLKFHGLGVDAYDRQTWGRAPQAEVLTPGYKYNLTDINAAIALTQLVKLEHLNTRRREIAQQYQQALAALPFQPLSLPAWPHVHAWHLFIIRVDEQRCGISRDALMEALKERGIGTGLHFRAAHTQKYYRERFPTLSLPNTEWNSERICSLPLFPDMTTADADHVITALQQLAGQ.

Lysine 182 is modified (N6-(pyridoxal phosphate)lysine).

The protein belongs to the DegT/DnrJ/EryC1 family. ArnB subfamily. As to quaternary structure, homodimer. Pyridoxal 5'-phosphate is required as a cofactor.

It carries out the reaction UDP-4-amino-4-deoxy-beta-L-arabinose + 2-oxoglutarate = UDP-beta-L-threo-pentopyranos-4-ulose + L-glutamate. Its pathway is nucleotide-sugar biosynthesis; UDP-4-deoxy-4-formamido-beta-L-arabinose biosynthesis; UDP-4-deoxy-4-formamido-beta-L-arabinose from UDP-alpha-D-glucuronate: step 2/3. The protein operates within bacterial outer membrane biogenesis; lipopolysaccharide biosynthesis. Catalyzes the conversion of UDP-4-keto-arabinose (UDP-Ara4O) to UDP-4-amino-4-deoxy-L-arabinose (UDP-L-Ara4N). The modified arabinose is attached to lipid A and is required for resistance to polymyxin and cationic antimicrobial peptides. This chain is UDP-4-amino-4-deoxy-L-arabinose--oxoglutarate aminotransferase, found in Escherichia coli (strain K12 / DH10B).